A 230-amino-acid chain; its full sequence is Uracil-DNA glycosylase (230 aa).

The active-site Proton acceptor is the Asp-70.

This sequence belongs to the uracil-DNA glycosylase (UDG) superfamily. UNG family.

It is found in the cytoplasm. It catalyses the reaction Hydrolyzes single-stranded DNA or mismatched double-stranded DNA and polynucleotides, releasing free uracil.. In terms of biological role, excises uracil residues from the DNA which can arise as a result of misincorporation of dUMP residues by DNA polymerase or due to deamination of cytosine. The chain is Uracil-DNA glycosylase from Pseudomonas savastanoi pv. phaseolicola (strain 1448A / Race 6) (Pseudomonas syringae pv. phaseolicola (strain 1448A / Race 6)).